A 383-amino-acid polypeptide reads, in one-letter code: Putative 8-amino-7-oxononanoate synthase (383 aa).

Residue Arg-22 participates in substrate binding. A pyridoxal 5'-phosphate-binding site is contributed by 109–110; that stretch reads GY. Residue His-134 coordinates substrate. Residues Ser-182, 207-210, and 236-239 contribute to the pyridoxal 5'-phosphate site; these read DDAH and TLSK. At Lys-239 the chain carries N6-(pyridoxal phosphate)lysine. Thr-348 provides a ligand contact to substrate.

The protein belongs to the class-II pyridoxal-phosphate-dependent aminotransferase family. BioF subfamily. Homodimer. The cofactor is pyridoxal 5'-phosphate.

The enzyme catalyses 6-carboxyhexanoyl-[ACP] + L-alanine + H(+) = (8S)-8-amino-7-oxononanoate + holo-[ACP] + CO2. It participates in cofactor biosynthesis; biotin biosynthesis. Catalyzes the decarboxylative condensation of pimeloyl-[acyl-carrier protein] and L-alanine to produce 8-amino-7-oxononanoate (AON), [acyl-carrier protein], and carbon dioxide. This is Putative 8-amino-7-oxononanoate synthase (bioF) from Caulobacter sp. (strain K31).